We begin with the raw amino-acid sequence, 250 residues long: 1-(5-phosphoribosyl)-5-[(5-phosphoribosylamino)methylideneamino] imidazole-4-carboxamide isomerase (250 aa).

Asp12 (proton acceptor) is an active-site residue. The active-site Proton donor is Asp134.

Belongs to the HisA/HisF family.

It is found in the cytoplasm. It catalyses the reaction 1-(5-phospho-beta-D-ribosyl)-5-[(5-phospho-beta-D-ribosylamino)methylideneamino]imidazole-4-carboxamide = 5-[(5-phospho-1-deoxy-D-ribulos-1-ylimino)methylamino]-1-(5-phospho-beta-D-ribosyl)imidazole-4-carboxamide. It functions in the pathway amino-acid biosynthesis; L-histidine biosynthesis; L-histidine from 5-phospho-alpha-D-ribose 1-diphosphate: step 4/9. This chain is 1-(5-phosphoribosyl)-5-[(5-phosphoribosylamino)methylideneamino] imidazole-4-carboxamide isomerase, found in Actinobacillus pleuropneumoniae serotype 7 (strain AP76).